A 340-amino-acid polypeptide reads, in one-letter code: Phenylalanine--tRNA ligase alpha subunit (340 aa).

Mg(2+) is bound at residue E254.

Belongs to the class-II aminoacyl-tRNA synthetase family. Phe-tRNA synthetase alpha subunit type 1 subfamily. Tetramer of two alpha and two beta subunits. Requires Mg(2+) as cofactor.

The protein localises to the cytoplasm. It carries out the reaction tRNA(Phe) + L-phenylalanine + ATP = L-phenylalanyl-tRNA(Phe) + AMP + diphosphate + H(+). The sequence is that of Phenylalanine--tRNA ligase alpha subunit from Chloroherpeton thalassium (strain ATCC 35110 / GB-78).